Consider the following 321-residue polypeptide: Cytochrome c biogenesis protein CcsA (321 aa).

Helical transmembrane passes span I9–L29, G44–G64, L71–F91, F98–L118, M143–I163, V225–N245, W252–L272, and A286–L306.

The protein belongs to the CcmF/CycK/Ccl1/NrfE/CcsA family. As to quaternary structure, may interact with Ccs1.

The protein localises to the plastid. The protein resides in the chloroplast thylakoid membrane. Its function is as follows. Required during biogenesis of c-type cytochromes (cytochrome c6 and cytochrome f) at the step of heme attachment. The chain is Cytochrome c biogenesis protein CcsA from Acorus calamus var. americanus (American sweet flag).